We begin with the raw amino-acid sequence, 513 residues long: ATP synthase subunit alpha (513 aa).

169–176 (GDRQCGKT) contributes to the ATP binding site.

The protein belongs to the ATPase alpha/beta chains family. F-type ATPases have 2 components, CF(1) - the catalytic core - and CF(0) - the membrane proton channel. CF(1) has five subunits: alpha(3), beta(3), gamma(1), delta(1), epsilon(1). CF(0) has three main subunits: a(1), b(2) and c(9-12). The alpha and beta chains form an alternating ring which encloses part of the gamma chain. CF(1) is attached to CF(0) by a central stalk formed by the gamma and epsilon chains, while a peripheral stalk is formed by the delta and b chains.

It is found in the cell inner membrane. The enzyme catalyses ATP + H2O + 4 H(+)(in) = ADP + phosphate + 5 H(+)(out). Its function is as follows. Produces ATP from ADP in the presence of a proton gradient across the membrane. The alpha chain is a regulatory subunit. The polypeptide is ATP synthase subunit alpha (Alteromonas mediterranea (strain DSM 17117 / CIP 110805 / LMG 28347 / Deep ecotype)).